The following is a 288-amino-acid chain: Diaminopimelate epimerase (288 aa).

Residues Asn-13, Gln-46, and Asn-66 each contribute to the substrate site. The Proton donor role is filled by Cys-75. Residues 76–77 (GN), Asn-166, Asn-199, and 217–218 (ER) each bind substrate. Cys-226 (proton acceptor) is an active-site residue. 227–228 (GT) serves as a coordination point for substrate.

The protein belongs to the diaminopimelate epimerase family. In terms of assembly, homodimer.

The protein localises to the cytoplasm. The catalysed reaction is (2S,6S)-2,6-diaminopimelate = meso-2,6-diaminopimelate. It functions in the pathway amino-acid biosynthesis; L-lysine biosynthesis via DAP pathway; DL-2,6-diaminopimelate from LL-2,6-diaminopimelate: step 1/1. Its function is as follows. Catalyzes the stereoinversion of LL-2,6-diaminopimelate (L,L-DAP) to meso-diaminopimelate (meso-DAP), a precursor of L-lysine and an essential component of the bacterial peptidoglycan. The sequence is that of Diaminopimelate epimerase from Cupriavidus necator (strain ATCC 17699 / DSM 428 / KCTC 22496 / NCIMB 10442 / H16 / Stanier 337) (Ralstonia eutropha).